The following is a 1311-amino-acid chain: Kinase and exchange factor for Rac A (1311 aa).

The 299-residue stretch at 18–316 (LVFKDIIGKG…STIVTILESI (299 aa)) folds into the Protein kinase domain. ATP contacts are provided by residues 24 to 32 (IGKGNFGCV) and Lys-45. Asp-138 functions as the Proton acceptor in the catalytic mechanism. 3 disordered regions span residues 169–201 (NGSDSSSSEDESDSECVNGAAGGGGDDVYKNNG), 360–426 (QQQS…TTTT), and 446–471 (PLSKHQQQQQRNQNSSIIDNNSLIGS). Positions 451 to 471 (QQQQQRNQNSSIIDNNSLIGS) are enriched in low complexity. In terms of domain architecture, IQ spans 650–679 (ELNLIIKLQSRIRGWLVRRRYKIFLSNWKL). In terms of domain architecture, DH spans 691–927 (QWIRLFNQLI…RETSNYIQSQ (237 aa)). Low complexity-rich tracts occupy residues 994 to 1021 (SKYNNNNNINTNNNNNNLTSSATQTNSN) and 1031 to 1044 (STSNANSDNSGNNN). Disordered regions lie at residues 994 to 1044 (SKYN…GNNN), 1114 to 1145 (NNPNGGGSNNNSIGGGGGGRGGSGNNSNNGSI), and 1208 to 1311 (GTST…FSKD). The segment covering 1117–1137 (NGGGSNNNSIGGGGGGRGGSG) has biased composition (gly residues). Residues 1208–1229 (GTSTPERKTSLVNMSPSTTSSL) are compositionally biased toward polar residues. Positions 1230–1245 (NNIDSNYNNNNNNVTN) are enriched in low complexity. Over residues 1246 to 1257 (TPIKSVTSSPSI) the composition is skewed to polar residues. The span at 1263–1276 (NDNNQQPQLPSQPN) shows a compositional bias: low complexity. The span at 1277–1287 (EEFQFTVPTTP) shows a compositional bias: polar residues. The segment covering 1290–1303 (KKKKRGSFSSKLKR) has biased composition (basic residues).

The protein belongs to the protein kinase superfamily. TKL Ser/Thr protein kinase family. Mg(2+) serves as cofactor.

The enzyme catalyses L-seryl-[protein] + ATP = O-phospho-L-seryl-[protein] + ADP + H(+). The catalysed reaction is L-threonyl-[protein] + ATP = O-phospho-L-threonyl-[protein] + ADP + H(+). The chain is Kinase and exchange factor for Rac A (kxcA) from Dictyostelium discoideum (Social amoeba).